The primary structure comprises 425 residues: Putative dipeptidase MGYG_00085 (425 aa).

The first 31 residues, 1 to 31 (MAPERRSRLSETAGLFVSLLALTSIVPVQAV), serve as a signal peptide directing secretion. The Zn(2+) site is built by H56, D58, and E168. Residues C107 and C197 are joined by a disulfide bond. Residue H195 coordinates substrate. The Zn(2+) site is built by H239 and H260. Positions 271 and 331 each coordinate substrate. Residue N403 is glycosylated (N-linked (GlcNAc...) asparagine).

Belongs to the metallo-dependent hydrolases superfamily. Peptidase M19 family. Zn(2+) serves as cofactor.

It carries out the reaction an L-aminoacyl-L-amino acid + H2O = 2 an L-alpha-amino acid. In terms of biological role, hydrolyzes a wide range of dipeptides. The polypeptide is Putative dipeptidase MGYG_00085 (Arthroderma gypseum (strain ATCC MYA-4604 / CBS 118893) (Microsporum gypseum)).